Consider the following 149-residue polypeptide: Calmodulin-3 (149 aa).

Ala-2 carries the N-acetylalanine modification. EF-hand domains are found at residues 8–43, 44–79, 81–116, and 117–149; these read DQIA…LGQN, PTEA…KMKD, DSEE…LGEK, and LTDE…MMAK. The Ca(2+) site is built by Asp-21, Asp-23, Asp-25, Cys-27, Glu-32, Asp-57, Asp-59, Asn-61, Thr-63, Glu-68, Asp-94, Asp-96, Asn-98, and Glu-105. Lys-116 carries the post-translational modification N6,N6,N6-trimethyllysine. Residues Asp-130, Asp-132, Asp-134, Gln-136, and Glu-141 each contribute to the Ca(2+) site.

Belongs to the calmodulin family.

Its function is as follows. Calmodulin mediates the control of a large number of enzymes, ion channels and other proteins by Ca(2+). Among the enzymes to be stimulated by the calmodulin-Ca(2+) complex are a number of protein kinases and phosphatases. In Oryza sativa subsp. indica (Rice), this protein is Calmodulin-3 (CAM3).